We begin with the raw amino-acid sequence, 71 residues long: UPF0352 protein VCM66_1964 (71 aa).

This sequence belongs to the UPF0352 family.

The protein is UPF0352 protein VCM66_1964 of Vibrio cholerae serotype O1 (strain M66-2).